The sequence spans 202 residues: uncharacterized protein (202 aa).

This is an uncharacterized protein from Treponema pallidum (strain Nichols).